The primary structure comprises 291 residues: Phosphate import ATP-binding protein PstB (291 aa).

Positions 1-17 (MANTNVKEKELAKHTDQ) are enriched in basic and acidic residues. Positions 1–40 (MANTNVKEKELAKHTDQSQESISTVVSSNEVKHNKESDSN) are disordered. A compositionally biased stretch (polar residues) spans 18-29 (SQESISTVVSSN). Positions 30-40 (EVKHNKESDSN) are enriched in basic and acidic residues. The ABC transporter domain occupies 45-286 (YSTQNLDLWY…PSDKQTEDYI (242 aa)). 77 to 84 (GPSGCGKS) is a binding site for ATP.

It belongs to the ABC transporter superfamily. Phosphate importer (TC 3.A.1.7) family. As to quaternary structure, the complex is composed of two ATP-binding proteins (PstB), two transmembrane proteins (PstC and PstA) and a solute-binding protein (PstS).

The protein resides in the cell membrane. The enzyme catalyses phosphate(out) + ATP + H2O = ADP + 2 phosphate(in) + H(+). In terms of biological role, part of the ABC transporter complex PstSACB involved in phosphate import. Responsible for energy coupling to the transport system. The chain is Phosphate import ATP-binding protein PstB from Staphylococcus haemolyticus (strain JCSC1435).